An 89-amino-acid polypeptide reads, in one-letter code: MANHKSAKKMIKVIAKRTLINKMRKSKTRTAIRNLVDIIKSGDKENVVLAFRNAESNLHKCVNKGVIHRNTAARKISRLNAKVKALMTA.

The protein belongs to the bacterial ribosomal protein bS20 family.

Its function is as follows. Binds directly to 16S ribosomal RNA. The chain is Small ribosomal subunit protein bS20 from Wolbachia pipientis wMel.